The following is a 309-amino-acid chain: Branched-chain-amino-acid aminotransferase (309 aa).

Lysine 160 carries the N6-(pyridoxal phosphate)lysine modification.

The protein belongs to the class-IV pyridoxal-phosphate-dependent aminotransferase family. Homohexamer. Pyridoxal 5'-phosphate is required as a cofactor.

The enzyme catalyses L-leucine + 2-oxoglutarate = 4-methyl-2-oxopentanoate + L-glutamate. It catalyses the reaction L-isoleucine + 2-oxoglutarate = (S)-3-methyl-2-oxopentanoate + L-glutamate. The catalysed reaction is L-valine + 2-oxoglutarate = 3-methyl-2-oxobutanoate + L-glutamate. It participates in amino-acid biosynthesis; L-isoleucine biosynthesis; L-isoleucine from 2-oxobutanoate: step 4/4. It functions in the pathway amino-acid biosynthesis; L-leucine biosynthesis; L-leucine from 3-methyl-2-oxobutanoate: step 4/4. The protein operates within amino-acid biosynthesis; L-valine biosynthesis; L-valine from pyruvate: step 4/4. Functionally, acts on leucine, isoleucine and valine. The chain is Branched-chain-amino-acid aminotransferase (ilvE) from Salmonella typhi.